A 206-amino-acid polypeptide reads, in one-letter code: Ribosomal RNA small subunit methyltransferase G (206 aa).

Residues G74, L79, 125–126 (VE), and R140 each bind S-adenosyl-L-methionine.

It belongs to the methyltransferase superfamily. RNA methyltransferase RsmG family.

It localises to the cytoplasm. The catalysed reaction is guanosine(527) in 16S rRNA + S-adenosyl-L-methionine = N(7)-methylguanosine(527) in 16S rRNA + S-adenosyl-L-homocysteine. In terms of biological role, specifically methylates the N7 position of guanine in position 527 of 16S rRNA. The polypeptide is Ribosomal RNA small subunit methyltransferase G (Shewanella baltica (strain OS223)).